The following is a 504-amino-acid chain: uncharacterized protein (504 aa).

A helical membrane pass occupies residues 6–26 (NLFIIFIFLFLLSQVSAYITF).

The protein to M.jannaschii MJ1506 and MJ1561.

It is found in the membrane. This is an uncharacterized protein from Methanocaldococcus jannaschii (strain ATCC 43067 / DSM 2661 / JAL-1 / JCM 10045 / NBRC 100440) (Methanococcus jannaschii).